The sequence spans 383 residues: Xylose/arabinose import ATP-binding protein XacK (383 aa).

The ABC transporter domain maps to 4–240 (LTLDDVTKVY…PNNLFVAGFI (237 aa)). 41–48 (GPSGCGKS) is a binding site for ATP.

It belongs to the ABC transporter superfamily. Carbohydrate uptake transporter-1 (CUT1) (TC 3.A.1.1) family. The complex is composed of two ATP-binding proteins (XacJ and XacK), two transmembrane proteins (XacH and XacI) and a solute-binding protein (XacG).

The protein resides in the cell membrane. The catalysed reaction is D-xylose(out) + ATP + H2O = D-xylose(in) + ADP + phosphate + H(+). It carries out the reaction L-arabinose(out) + ATP + H2O = L-arabinose(in) + ADP + phosphate + H(+). Its function is as follows. Part of the ABC transporter complex XacGHIJK involved in the uptake of xylose and arabinose. Responsible for energy coupling to the transport system. The polypeptide is Xylose/arabinose import ATP-binding protein XacK (Haloferax volcanii (strain ATCC 29605 / DSM 3757 / JCM 8879 / NBRC 14742 / NCIMB 2012 / VKM B-1768 / DS2) (Halobacterium volcanii)).